Consider the following 275-residue polypeptide: Large ribosomal subunit protein uL2 (275 aa).

The tract at residues 227 to 261 (PVDHPHGGGEAKSGQGNPHPVTPWGVPTKGYKTRK) is disordered.

This sequence belongs to the universal ribosomal protein uL2 family. In terms of assembly, part of the 50S ribosomal subunit. Forms a bridge to the 30S subunit in the 70S ribosome.

Its function is as follows. One of the primary rRNA binding proteins. Required for association of the 30S and 50S subunits to form the 70S ribosome, for tRNA binding and peptide bond formation. It has been suggested to have peptidyltransferase activity; this is somewhat controversial. Makes several contacts with the 16S rRNA in the 70S ribosome. In Xylella fastidiosa (strain M23), this protein is Large ribosomal subunit protein uL2.